The primary structure comprises 1206 residues: uncharacterized protein (1206 aa).

3 disordered regions span residues 133-547 (YDLD…PVDY), 568-837 (FASS…DQLL), and 859-1206 (RQRA…KATS). Composition is skewed to pro residues over residues 139-151 (IPPP…PGPP) and 159-234 (GESP…PPAP). Ser255 is modified (phosphoserine). Residues 305–319 (VRTSSIPVQEAPGAS) are compositionally biased toward low complexity. Over residues 351-363 (RALEPEQPREPRP) the composition is skewed to basic and acidic residues. Pro residues predominate over residues 384–413 (APPPAPPLPPPAPPLPPPAPSLPPAAPPLP). Positions 414–436 (STELAAPPSSGFMKTSKSNSPAL) are enriched in low complexity. Positions 454–467 (VDWRDPRQMEKLRS) are enriched in basic and acidic residues. Over residues 522–531 (PEKSPSSSSL) the composition is skewed to low complexity. Residues 568-577 (FASSAEKEAK) show a composition bias toward basic and acidic residues. The span at 656 to 671 (LPKATPGLTLPLKPTP) shows a compositional bias: low complexity. A Phosphothreonine modification is found at Thr680. A compositionally biased stretch (basic and acidic residues) spans 732–747 (AEKDLASVRQREKPET). Over residues 1001–1016 (IPPPPEFSNDPEPPAP) the composition is skewed to pro residues. The span at 1028-1041 (PRNNFSDLGQSWGP) shows a compositional bias: polar residues. Arg1051, Arg1083, and Arg1094 each carry omega-N-methylarginine. The segment covering 1170–1184 (PHGNTHYGSPINTFT) has biased composition (polar residues).

This is an uncharacterized protein from Mus musculus (Mouse).